The chain runs to 311 residues: Lipoyl synthase (311 aa).

7 residues coordinate [4Fe-4S] cluster: Cys47, Cys52, Cys58, Cys73, Cys77, Cys80, and Ser286. Residues 59–276 (WSRHTATYLA…RSVGESLGLF (218 aa)) enclose the Radical SAM core domain.

This sequence belongs to the radical SAM superfamily. Lipoyl synthase family. Requires [4Fe-4S] cluster as cofactor.

It localises to the cytoplasm. It carries out the reaction [[Fe-S] cluster scaffold protein carrying a second [4Fe-4S](2+) cluster] + N(6)-octanoyl-L-lysyl-[protein] + 2 oxidized [2Fe-2S]-[ferredoxin] + 2 S-adenosyl-L-methionine + 4 H(+) = [[Fe-S] cluster scaffold protein] + N(6)-[(R)-dihydrolipoyl]-L-lysyl-[protein] + 4 Fe(3+) + 2 hydrogen sulfide + 2 5'-deoxyadenosine + 2 L-methionine + 2 reduced [2Fe-2S]-[ferredoxin]. Its pathway is protein modification; protein lipoylation via endogenous pathway; protein N(6)-(lipoyl)lysine from octanoyl-[acyl-carrier-protein]: step 2/2. Functionally, catalyzes the radical-mediated insertion of two sulfur atoms into the C-6 and C-8 positions of the octanoyl moiety bound to the lipoyl domains of lipoate-dependent enzymes, thereby converting the octanoylated domains into lipoylated derivatives. The sequence is that of Lipoyl synthase from Chlamydia trachomatis serovar L2 (strain ATCC VR-902B / DSM 19102 / 434/Bu).